The sequence spans 108 residues: Nucleoid-associated protein Bphy_0952 (108 aa).

Positions alanine 87–phenylalanine 108 are disordered. Positions proline 99 to phenylalanine 108 are enriched in pro residues.

The protein belongs to the YbaB/EbfC family. Homodimer.

It is found in the cytoplasm. The protein resides in the nucleoid. Its function is as follows. Binds to DNA and alters its conformation. May be involved in regulation of gene expression, nucleoid organization and DNA protection. This is Nucleoid-associated protein Bphy_0952 from Paraburkholderia phymatum (strain DSM 17167 / CIP 108236 / LMG 21445 / STM815) (Burkholderia phymatum).